A 245-amino-acid chain; its full sequence is tRNA pseudouridine synthase A (245 aa).

D52 serves as the catalytic Nucleophile. Y111 is a binding site for substrate.

Belongs to the tRNA pseudouridine synthase TruA family. Homodimer.

It carries out the reaction uridine(38/39/40) in tRNA = pseudouridine(38/39/40) in tRNA. In terms of biological role, formation of pseudouridine at positions 38, 39 and 40 in the anticodon stem and loop of transfer RNAs. This Bradyrhizobium sp. (strain BTAi1 / ATCC BAA-1182) protein is tRNA pseudouridine synthase A.